A 427-amino-acid polypeptide reads, in one-letter code: ATP synthase subunit beta (427 aa).

160–167 is a binding site for ATP; it reads GGAGVGKT.

Belongs to the ATPase alpha/beta chains family. As to quaternary structure, F-type ATPases have 2 components, CF(1) - the catalytic core - and CF(0) - the membrane proton channel. CF(1) has five subunits: alpha(3), beta(3), gamma(1), delta(1), epsilon(1). CF(0) has three main subunits: a(1), b(2) and c(9-12). The alpha and beta chains form an alternating ring which encloses part of the gamma chain. CF(1) is attached to CF(0) by a central stalk formed by the gamma and epsilon chains, while a peripheral stalk is formed by the delta and b chains.

Its subcellular location is the cell membrane. The catalysed reaction is ATP + H2O + 4 H(+)(in) = ADP + phosphate + 5 H(+)(out). Its function is as follows. Produces ATP from ADP in the presence of a proton gradient across the membrane. The catalytic sites are hosted primarily by the beta subunits. The polypeptide is ATP synthase subunit beta (Peptococcus niger).